The primary structure comprises 331 residues: Coiled-coil domain-containing protein 92 (331 aa).

Coiled coils occupy residues Met18–Thr44 and Asp76–Ala152. A compositionally biased stretch (low complexity) spans Ser171 to Pro184. Positions Ser171–Ala212 are disordered. The span at Pro193–Arg203 shows a compositional bias: basic and acidic residues. Ser209 bears the Phosphoserine mark.

Interacts with CEP164. As to quaternary structure, (Microbial infection) Interacts with ebolavirus protein NP; this interaction sequesters NP in the cytoplasm. In terms of processing, phosphorylated at Ser-209 by TTBK2.

The protein resides in the cytoplasm. The protein localises to the cytoskeleton. It localises to the microtubule organizing center. Its subcellular location is the centrosome. It is found in the centriole. Functionally, interferon-stimulated protein that plays a role in innate immunity. Strongly inhibits ebolavirus transcription and replication. Forms a complex with viral RNA-bound nucleocapsid NP and thereby prevents the transport of NP to the cell surface. This is Coiled-coil domain-containing protein 92 (CCDC92) from Homo sapiens (Human).